Here is a 238-residue protein sequence, read N- to C-terminus: RNA-binding protein pno1 (238 aa).

One can recognise a KH domain in the interval 162 to 211 (QSRAIGRLAGKGGRTKFTIENVTKTRIVLADSKIHILGSYQNIQLARRAI).

The protein belongs to the PNO1 family.

It is found in the nucleus. It localises to the nucleolus. In Drosophila pseudoobscura pseudoobscura (Fruit fly), this protein is RNA-binding protein pno1 (l(1)G0004).